The sequence spans 289 residues: 4-hydroxybenzoate octaprenyltransferase (289 aa).

Transmembrane regions (helical) follow at residues 33–53, 99–119, 141–161, 163–183, 213–233, 238–258, and 268–288; these read LWAL…AVFV, LFVV…TMTI, LPQV…FAAV, ESVP…AVAY, LIIG…GRLN, EFYW…KLIV, and AFLN…MSYW.

It belongs to the UbiA prenyltransferase family. Mg(2+) is required as a cofactor.

The protein localises to the cell inner membrane. It catalyses the reaction all-trans-octaprenyl diphosphate + 4-hydroxybenzoate = 4-hydroxy-3-(all-trans-octaprenyl)benzoate + diphosphate. It functions in the pathway cofactor biosynthesis; ubiquinone biosynthesis. In terms of biological role, catalyzes the prenylation of para-hydroxybenzoate (PHB) with an all-trans polyprenyl group. Mediates the second step in the final reaction sequence of ubiquinone-8 (UQ-8) biosynthesis, which is the condensation of the polyisoprenoid side chain with PHB, generating the first membrane-bound Q intermediate 3-octaprenyl-4-hydroxybenzoate. In Enterobacter sp. (strain 638), this protein is 4-hydroxybenzoate octaprenyltransferase.